Consider the following 80-residue polypeptide: D-alanyl carrier protein 1 (80 aa).

The 80-residue stretch at 1–80 folds into the Carrier domain; that stretch reads MTMDDTKATV…KIVAKVENLQ (80 aa). S38 bears the O-(pantetheine 4'-phosphoryl)serine mark.

Belongs to the DltC family. 4'-phosphopantetheine is transferred from CoA to a specific serine of apo-DCP.

Its subcellular location is the cytoplasm. It functions in the pathway cell wall biogenesis; lipoteichoic acid biosynthesis. Its function is as follows. Carrier protein involved in the D-alanylation of lipoteichoic acid (LTA). The loading of thioester-linked D-alanine onto DltC is catalyzed by D-alanine--D-alanyl carrier protein ligase DltA. The DltC-carried D-alanyl group is further transferred to cell membrane phosphatidylglycerol (PG) by forming an ester bond, probably catalyzed by DltD. D-alanylation of LTA plays an important role in modulating the properties of the cell wall in Gram-positive bacteria, influencing the net charge of the cell wall. The sequence is that of D-alanyl carrier protein 1 from Lactiplantibacillus plantarum (strain ATCC BAA-793 / NCIMB 8826 / WCFS1) (Lactobacillus plantarum).